Reading from the N-terminus, the 309-residue chain is Formate-nitrite transporter (309 aa).

Over 1-19 (MPPNNSKYVLDPVSIKSVC) the chain is Cytoplasmic. The segment at residues 20–35 (GGEESYIRCVEYGKKK) is an intramembrane region (helical). At 36 to 40 (AHYSN) the chain is on the cytoplasmic side. The chain crosses the membrane as a helical span at residues 41–68 (LNLLAKAILAGMFVGLCAHASGIAGGLF). Over 69-79 (YYHKLREIVGA) the chain is Extracellular. A helical membrane pass occupies residues 80 to 100 (SMSVFVYGFTFPIAFMCIICT). The Cytoplasmic segment spans residues 101–122 (GSDLFTGNTLAVTMALYEKKVK). The chain crosses the membrane as a helical span at residues 123–150 (LLDYLRVMTISLFGNYVGAVSFAFFVSY). Topologically, residues 151-163 (LSGAFTNVHAVEK) are extracellular. The helical intramembrane region spans 164-179 (NHFFQFLNDIAEKKVH). The Extracellular segment spans residues 180-181 (HT). The helical transmembrane segment at 182-206 (FVECVSLAVGCNIFVCLAVYFVLTL) threads the bilayer. Residues 207–209 (KDG) lie on the Cytoplasmic side of the membrane. Residues 210 to 226 (AGYVFSVFFAVYAFAIA) traverse the membrane as a helical segment. Topologically, residues 227 to 249 (GYEHIIANIYTLNIALMVNTKIT) are extracellular. Residues 250 to 280 (VYQAYIKNLLPTLLGNYIAGAIVLGLPLYFI) form a helical membrane-spanning segment. Topologically, residues 281–309 (YKEHYYNFERSKRDNNDAQMKSLSIELRN) are cytoplasmic.

Belongs to the FNT transporter (TC 1.A.16) family. In terms of assembly, homopentamer.

Its subcellular location is the cell membrane. The protein localises to the vacuole membrane. The enzyme catalyses (S)-lactate(in) + H(+)(in) = (S)-lactate(out) + H(+)(out). It catalyses the reaction formate(in) + H(+)(in) = formate(out) + H(+)(out). The catalysed reaction is pyruvate(out) + H(+)(out) = pyruvate(in) + H(+)(in). It carries out the reaction acetate(out) + H(+)(out) = acetate(in) + H(+)(in). Inhibited by diethylpyrocarbonate (DEPC). Protonophores, such as 2,4-dinitrophenol and carbonylcyanide-3-chlorophenylhydrazone, abolish transport. Inhibited by phloretin, furosemide, alpha-cyano-4-hydroxy-cinnamate and alpha-fluorocinnamate. Inhibited by the Malaria Box compound MMV007839 and its derivatives BH296 and BH267.meta. Inhibited by the Malaria Box compound MMV000972. Inhibited by broad-specificity anion transport inhibitor NPPB. Monocarboxylate-proton symporter that mediates the efflux of the waste product lactate in the intraerythrocytic parasites; active in acidic-to-neutral pH range. Transports L-lactate. Transports D-lactate, pyruvate, acetate and formate. Essential for asexual growth but dispensable for the development of gametocytes. The sequence is that of Formate-nitrite transporter from Plasmodium falciparum (isolate 3D7).